Here is a 470-residue protein sequence, read N- to C-terminus: Suppressor of SWI4 1 homolog (470 aa).

The 264-residue stretch at 29–292 (PHSFVFTRGR…LIKIQEGVGN (264 aa)) folds into the Brix domain. 2 positions are modified to phosphoserine: Ser238 and Ser240. Disordered regions lie at residues 240–264 (SEVE…GNMQ) and 323–470 (AQRQ…RRRN). Residues 342-355 (AHKKKSLAGIKRAR) show a composition bias toward basic residues. Ser362 carries the post-translational modification Phosphoserine. An N6-acetyllysine modification is found at Lys441. A compositionally biased stretch (basic residues) spans 447 to 457 (QRGKAKPRPRA).

Its subcellular location is the nucleus. It localises to the nucleolus. Functionally, may have a role in cell growth. This is Suppressor of SWI4 1 homolog (Ppan) from Mus musculus (Mouse).